The following is a 536-amino-acid chain: Uridine 5'-monophosphate transferase (536 aa).

Residues 22–84 (ADHPTHTPED…GLQQCSSSPS (63 aa)) are disordered. Positions 31-45 (DSPQTVPSPRSSSAH) are enriched in polar residues. Over residues 48 to 60 (EIQELRSLQETRP) the composition is skewed to basic and acidic residues. Residues 66–84 (RSQSRSSKHGLQQCSSSPS) show a composition bias toward polar residues. LRR repeat units follow at residues 140-164 (AGQA…LHRL), 165-189 (AHLR…SLCK), 191-211 (LERI…IGAL), 212-234 (KNLS…IGQC), 236-257 (SLTT…LANL), and 258-282 (TQLK…NLDD). Residues 377 to 533 (ITLDRIFKLN…LEGIATVMNQ (157 aa)) form the Fido domain.

It in the C-terminal section; belongs to the fic family. As to quaternary structure, interacts with several members of the Arabidopsis RLCK VIIa subfamily.

The protein localises to the secreted. It is found in the host cell. It localises to the host cell membrane. It carries out the reaction L-seryl-[protein] + UTP = O-(5'-uridylyl)-L-seryl-[protein] + diphosphate. The enzyme catalyses L-threonyl-[protein] + UTP = uridylyl-L-threonyl-[protein] + diphosphate. Functions both as a virulence and an avirulence gene in Arabidopsis. Causes disease on the Kashmir (Kas) ecotype, but not on Columbia (Col-0) ecotype. Acts by directly uridylylating the conserved phosphorylation sites in the activation loop of a number of host receptor-like cytoplasmic protein kinases (RLCK), including BIK1, RIPK, PBL1 and PBL2, preventing the activation of these kinases and subsequent signal transduction. In susceptible Arabidopsis plants, uridylylation of BIK1 inhibits the PAMP-triggered immunity (PTI) signaling cascade and thereby promotes bacterial virulence. It also inhibits RPM1-dependent effector-triggered immunity (ETI) in mesophyll tissues by targeting RIPK. In contrast, in the resistant ecotype Col-0, xopAC is a major avirulence gene. Uridylylation of PBL2 triggers the PBL2-RKS1 interaction and thus the assembly of the PBL2-RKS1-ZAR1 complex, which, in turn, activates effector-triggered immunity (ETI) against X.campestris. The polypeptide is Uridine 5'-monophosphate transferase (Xanthomonas campestris pv. campestris (strain 8004)).